We begin with the raw amino-acid sequence, 337 residues long: Putative [LysW]-lysine/[LysW]-ornithine hydrolase (337 aa).

H67 serves as a coordination point for Zn(2+). D69 is an active-site residue. D91 is a binding site for Zn(2+). E118 serves as the catalytic Proton acceptor. Positions 119, 140, and 298 each coordinate Zn(2+).

This sequence belongs to the peptidase M20A family. LysK subfamily. Zn(2+) serves as cofactor. Co(2+) is required as a cofactor.

Its subcellular location is the cytoplasm. It catalyses the reaction [amino-group carrier protein]-C-terminal-gamma-(L-lysyl)-L-glutamate + H2O = [amino-group carrier protein]-C-terminal-L-glutamate + L-lysine. The catalysed reaction is [amino-group carrier protein]-C-terminal-gamma-(L-ornithyl)-L-glutamate + H2O = [amino-group carrier protein]-C-terminal-L-glutamate + L-ornithine. It functions in the pathway amino-acid biosynthesis; L-lysine biosynthesis via AAA pathway; L-lysine from L-alpha-aminoadipate (Thermus route): step 5/5. Its pathway is amino-acid biosynthesis; L-arginine biosynthesis. In terms of biological role, catalyzes the release of L-lysine from [LysW]-gamma-L-lysine and the release of L-ornithine from [LysW]-L-ornithine. This is Putative [LysW]-lysine/[LysW]-ornithine hydrolase from Pyrococcus abyssi (strain GE5 / Orsay).